The sequence spans 511 residues: Probable endopeptidase p60 (511 aa).

Positions M1–A27 are cleaved as a signal peptide. The LysM 1 domain occupies N28–I71. In terms of domain architecture, SH3b spans K78 to K142. A LysM 2 domain is found at S175–V218. Low complexity-rich tracts occupy residues T229–P257 and K264–A282. Positions T229–A291 are disordered. The region spanning A297 to V341 is the LysM 3 domain. 2 stretches are compositionally biased toward low complexity: residues K347 to A362 and T372 to Q390. The segment at K347–Q390 is disordered. Residues S393 to V511 form the NlpC/P60 domain. C423 serves as the catalytic Nucleophile. H473 acts as the Proton acceptor in catalysis. D485 is an active-site residue.

The protein belongs to the peptidase C40 family.

Functionally, this major extracellular protein may be involved in the invasion of non-professional phagocytic cells by Listeria. In Listeria grayi (Listeria murrayi), this protein is Probable endopeptidase p60 (iap).